The primary structure comprises 200 residues: Large ribosomal subunit protein uL4 (200 aa).

The segment at 42-65 (TRAQKTRSEVSGGGAKPWRQKGTG) is disordered.

The protein belongs to the universal ribosomal protein uL4 family. As to quaternary structure, part of the 50S ribosomal subunit.

One of the primary rRNA binding proteins, this protein initially binds near the 5'-end of the 23S rRNA. It is important during the early stages of 50S assembly. It makes multiple contacts with different domains of the 23S rRNA in the assembled 50S subunit and ribosome. Its function is as follows. Forms part of the polypeptide exit tunnel. In Vibrio cholerae serotype O1 (strain ATCC 39541 / Classical Ogawa 395 / O395), this protein is Large ribosomal subunit protein uL4.